The primary structure comprises 493 residues: Galactose-1-phosphate uridylyltransferase (493 aa).

The protein belongs to the galactose-1-phosphate uridylyltransferase type 2 family.

The protein resides in the cytoplasm. The catalysed reaction is alpha-D-galactose 1-phosphate + UDP-alpha-D-glucose = alpha-D-glucose 1-phosphate + UDP-alpha-D-galactose. Its pathway is carbohydrate metabolism; galactose metabolism. The chain is Galactose-1-phosphate uridylyltransferase from Streptococcus pneumoniae serotype 19F (strain G54).